A 292-amino-acid polypeptide reads, in one-letter code: tRNA-cytidine(32) 2-sulfurtransferase (292 aa).

Residues 53–58 (SGGKDS) carry the PP-loop motif motif. The [4Fe-4S] cluster site is built by Cys128, Cys131, and Cys219.

It belongs to the TtcA family. In terms of assembly, homodimer. Requires Mg(2+) as cofactor. [4Fe-4S] cluster is required as a cofactor.

The protein localises to the cytoplasm. It carries out the reaction cytidine(32) in tRNA + S-sulfanyl-L-cysteinyl-[cysteine desulfurase] + AH2 + ATP = 2-thiocytidine(32) in tRNA + L-cysteinyl-[cysteine desulfurase] + A + AMP + diphosphate + H(+). It functions in the pathway tRNA modification. In terms of biological role, catalyzes the ATP-dependent 2-thiolation of cytidine in position 32 of tRNA, to form 2-thiocytidine (s(2)C32). The sulfur atoms are provided by the cysteine/cysteine desulfurase (IscS) system. In Cereibacter sphaeroides (strain ATCC 17023 / DSM 158 / JCM 6121 / CCUG 31486 / LMG 2827 / NBRC 12203 / NCIMB 8253 / ATH 2.4.1.) (Rhodobacter sphaeroides), this protein is tRNA-cytidine(32) 2-sulfurtransferase.